The chain runs to 679 residues: Altered inheritance of mitochondria protein 21 (679 aa).

The tract at residues 1 to 85 (MPSEVTPKVP…LQRPVRRSTT (85 aa)) is disordered. Basic and acidic residues predominate over residues 9-19 (VPERPSRRKTS). T18 is modified (phosphothreonine). A Phosphoserine modification is found at S36. T58 is subject to Phosphothreonine. S70 is subject to Phosphoserine. T85 is subject to Phosphothreonine. At S104 the chain carries Phosphoserine. Residues 110 to 119 (NIHNVSRKKS) are compositionally biased toward basic residues. Disordered stretches follow at residues 110 to 522 (NIHN…EKIE), 549 to 580 (IDTT…PNKM), and 593 to 679 (EKLP…FHSL). 2 stretches are compositionally biased toward polar residues: residues 133-149 (QNGQ…TNPS) and 164-178 (SAIS…SNNE). Residues 179–213 (VTEHSDSEDLTEKQKVHAALDNEAGDRSHFEEKLI) show a composition bias toward basic and acidic residues. Phosphoserine occurs at positions 183, 206, and 231. Residues 243-272 (SDDKAEKFTKHPESSLEELQKHQEQQEEKI) show a composition bias toward basic and acidic residues. A Phosphothreonine modification is found at T277. S284 is subject to Phosphoserine. The segment covering 296–323 (EVNSQPQGPSDTETVIAATSSNVPSQIA) has biased composition (polar residues). S324 is modified (phosphoserine). Basic and acidic residues-rich tracts occupy residues 339-361 (KKDF…RVSE) and 372-383 (EESKIPKIPSER). The interaction with SH3 domain of ABP1 stretch occupies residues 383–396 (RPKRRAPPPVPKKP). Composition is skewed to polar residues over residues 414-427 (DLHN…TTAS) and 437-452 (SSIT…TSKL). The segment covering 471–482 (LEKKLSSPDTES) has biased composition (basic and acidic residues). Basic residues predominate over residues 501 to 512 (RRGRGPRGRKLP). The residue at position 552 (T552) is a Phosphothreonine. Positions 556 to 576 (QAERALDEKSKSIPEEQREQS) are enriched in basic and acidic residues. At S576 the chain carries Phosphoserine. The span at 603 to 613 (PLSQLPQTNAV) shows a compositional bias: polar residues. Residues S620, S623, S625, S627, S667, S671, S675, and S678 each carry the phosphoserine modification. The segment covering 667 to 679 (SALHSEEASFHSL) has biased composition (basic and acidic residues).

Belongs to the AIM21 family. Interacts with ribosomes. Interacts with ABP1.

The protein localises to the cytoplasm. It localises to the cytoskeleton. The protein resides in the actin patch. Involved in mitochondrial migration along actin filaments. This chain is Altered inheritance of mitochondria protein 21 (AIM21), found in Saccharomyces cerevisiae (strain ATCC 204508 / S288c) (Baker's yeast).